The primary structure comprises 57 residues: UPF0391 membrane protein RPB_2510 (57 aa).

Transmembrane regions (helical) follow at residues 6 to 26 and 35 to 55; these read WALI…TGIS and ILFY…FTIF.

It belongs to the UPF0391 family.

The protein localises to the cell membrane. This chain is UPF0391 membrane protein RPB_2510, found in Rhodopseudomonas palustris (strain HaA2).